The following is a 295-amino-acid chain: Phosphoribosylaminoimidazole-succinocarboxamide synthase (295 aa).

The protein belongs to the SAICAR synthetase family.

The enzyme catalyses 5-amino-1-(5-phospho-D-ribosyl)imidazole-4-carboxylate + L-aspartate + ATP = (2S)-2-[5-amino-1-(5-phospho-beta-D-ribosyl)imidazole-4-carboxamido]succinate + ADP + phosphate + 2 H(+). The protein operates within purine metabolism; IMP biosynthesis via de novo pathway; 5-amino-1-(5-phospho-D-ribosyl)imidazole-4-carboxamide from 5-amino-1-(5-phospho-D-ribosyl)imidazole-4-carboxylate: step 1/2. This is Phosphoribosylaminoimidazole-succinocarboxamide synthase from Corynebacterium ammoniagenes (Brevibacterium ammoniagenes).